Consider the following 291-residue polypeptide: Stomatin-like protein 3 (291 aa).

Residue serine 7 is modified to Phosphoserine. Residues 29–49 (WILFSLSFLLVIITFPISIWM) form a helical; Signal-anchor for type III membrane protein membrane-spanning segment. Residues 50 to 291 (CLKIIKEYER…DNHKKLPNKA (242 aa)) are Cytoplasmic-facing. Serine 241 carries the post-translational modification Phosphoserine.

This sequence belongs to the band 7/mec-2 family. As to quaternary structure, homodimer. Interacts with PIEZO1 and PIEZO2.

It is found in the cell membrane. Functionally, required for the function of many mechanoreceptors. Modulate mechanotransduction channels and acid-sensing ion channels (ASIC) proteins. Potentiates PIEZO1 and PIEZO2 function by increasing their sensitivity to mechanical stimulations. This chain is Stomatin-like protein 3 (STOML3), found in Homo sapiens (Human).